Here is a 145-residue protein sequence, read N- to C-terminus: 3-dehydroquinate dehydratase (145 aa).

The active-site Proton acceptor is the Y23. Residues N73, H79, and D86 each contribute to the substrate site. The active-site Proton donor is H99. Residues 100–101 and R110 each bind substrate; that span reads LS.

Belongs to the type-II 3-dehydroquinase family. As to quaternary structure, homododecamer.

It catalyses the reaction 3-dehydroquinate = 3-dehydroshikimate + H2O. Its pathway is metabolic intermediate biosynthesis; chorismate biosynthesis; chorismate from D-erythrose 4-phosphate and phosphoenolpyruvate: step 3/7. Catalyzes a trans-dehydration via an enolate intermediate. The polypeptide is 3-dehydroquinate dehydratase (Desulfitobacterium hafniense (strain DSM 10664 / DCB-2)).